The primary structure comprises 392 residues: Antitrypsin (392 aa).

The signal sequence occupies residues 1-16; that stretch reads MKTIICLFTIAIAAMA.

It belongs to the serpin family. Hemolymph.

It is found in the secreted. May play a role in the prophenoloxidase activating system in the silkworm hemolymph. This chain is Antitrypsin, found in Bombyx mori (Silk moth).